The chain runs to 173 residues: Myeloid-derived growth factor (173 aa).

A signal peptide spans M1–A31.

Belongs to the MYDGF family. As to expression, expressed in eosinophils (at protein level). Expressed in bone marrow cells. Expressed in synovial tissue. Found in synovial fluid of patients with arthropaties.

The protein localises to the secreted. It is found in the endoplasmic reticulum-Golgi intermediate compartment. The protein resides in the endoplasmic reticulum. It localises to the golgi apparatus. Its function is as follows. Bone marrow-derived monocyte and paracrine-acting protein that promotes cardiac myocyte survival and adaptive angiogenesis for cardiac protection and/or repair after myocardial infarction (MI). Stimulates endothelial cell proliferation through a MAPK1/3-, STAT3- and CCND1-mediated signaling pathway. Inhibits cardiac myocyte apoptosis in a PI3K/AKT-dependent signaling pathway. Involved in endothelial cell proliferation and angiogenesis. This Homo sapiens (Human) protein is Myeloid-derived growth factor.